The primary structure comprises 210 residues: Probable sporulation protein YtaF (210 aa).

Helical transmembrane passes span 6–26, 36–56, 69–89, 129–149, 162–184, and 190–210; these read ILLL…TYGL, ILVI…IGSF, LGGL…FKPA, VING…AFGA, VMSI…AGHF, and WIDK…LWKL.

It is found in the cell membrane. The sequence is that of Probable sporulation protein YtaF (ytaF) from Bacillus subtilis (strain 168).